Here is a 485-residue protein sequence, read N- to C-terminus: Glutamyl-tRNA(Gln) amidotransferase subunit A (485 aa).

Active-site charge relay system residues include lysine 79 and serine 154. Serine 178 acts as the Acyl-ester intermediate in catalysis.

Belongs to the amidase family. GatA subfamily. Heterotrimer of A, B and C subunits.

The catalysed reaction is L-glutamyl-tRNA(Gln) + L-glutamine + ATP + H2O = L-glutaminyl-tRNA(Gln) + L-glutamate + ADP + phosphate + H(+). Functionally, allows the formation of correctly charged Gln-tRNA(Gln) through the transamidation of misacylated Glu-tRNA(Gln) in organisms which lack glutaminyl-tRNA synthetase. The reaction takes place in the presence of glutamine and ATP through an activated gamma-phospho-Glu-tRNA(Gln). This is Glutamyl-tRNA(Gln) amidotransferase subunit A from Staphylococcus aureus (strain Mu3 / ATCC 700698).